The following is a 328-amino-acid chain: P2Y purinoceptor 6 (328 aa).

At 1–27 (MEQDNGTIQAPGLPPTTCVYREDFKRL) the chain is on the extracellular side. Asn5 is a glycosylation site (N-linked (GlcNAc...) asparagine). Residues 28–48 (LLTPVYSVVLVVGLPLNICVI) form a helical membrane-spanning segment. The Cytoplasmic segment spans residues 49–62 (AQICASRRTLTRSA). A helical transmembrane segment spans residues 63-83 (VYTLNLALADLMYACSLPLLI). Topologically, residues 84-101 (YNYARGDHWPFGDLACRF) are extracellular. Residues Cys99 and Cys177 are joined by a disulfide bond. The chain crosses the membrane as a helical span at residues 102-122 (VRFLFYANLHGSILFLTCISF). Topologically, residues 123–144 (QRYLGICHPLASWHKRGGRRAA) are cytoplasmic. Residues 145-165 (WVVCGVVWLAVTAQCLPTAVF) form a helical membrane-spanning segment. The Extracellular portion of the chain corresponds to 166-194 (AATGIQRNRTVCYDLSPPILSTRYLPYGM). An N-linked (GlcNAc...) asparagine glycan is attached at Asn173. A helical membrane pass occupies residues 195 to 215 (ALTVIGFLLPFIALLACYCRM). Over 216–236 (ARRLCRQDGPAGPVAQERRSK) the chain is Cytoplasmic. Residues 237–257 (AARMAVVVAAVFAISFLPFHI) traverse the membrane as a helical segment. Over 258–280 (TKTAYLAVRSTPGVSCPVLETFA) the chain is Extracellular. A helical membrane pass occupies residues 281–303 (AAYKGTRPFASVNSVLDPILFYF). The Cytoplasmic segment spans residues 304–328 (TQQKFRRQPHDLLQRLTAKWQRQRV).

This sequence belongs to the G-protein coupled receptor 1 family.

The protein resides in the cell membrane. In terms of biological role, receptor for extracellular UTP &gt; ADP = 2-methylthio-ATP &gt; ADP-beta-S &gt; ATP = ATP-gamma-S. The activity of this receptor is mediated by G proteins which activate a phosphatidylinositol-calcium second messenger system. Functionally coupled to phospholipase C. In Mus musculus (Mouse), this protein is P2Y purinoceptor 6 (P2ry6).